The following is a 116-amino-acid chain: Protein Rev (116 aa).

Serine 5 and serine 8 each carry phosphoserine; by host CK2. A homomultimerization region spans residues 18–26 (LIKFLYQSN). Positions 23-49 (YQSNPPPNPEGTRQARRNRRRRWRERQ) are disordered. Positions 34–50 (TRQARRNRRRRWRERQR) match the Nuclear localization signal and RNA-binding (RRE) motif. Residues 36–47 (QARRNRRRRWRE) show a composition bias toward basic residues. The Nuclear export signal and binding to XPO1 signature appears at 73 to 84 (LQLPPLERLTLD). A phosphoserine; by host mark is found at serine 92 and serine 99.

This sequence belongs to the HIV-1 REV protein family. In terms of assembly, homomultimer; when bound to the RRE. Multimeric assembly is essential for activity and may involve XPO1. Binds to human KPNB1, XPO1, TNPO1, RANBP5 and IPO7. Interacts with the viral Integrase. Interacts with human KHDRBS1. Interacts with human NAP1; this interaction decreases Rev multimerization and stimulates its activity. Interacts with human DEAD-box helicases DDX3 and DDX24; these interactions may serve for viral RNA export to the cytoplasm and packaging, respectively. Interacts with human PSIP1; this interaction may inhibit HIV-1 DNA integration by promoting dissociation of the Integrase-LEDGF/p75 complex. Post-translationally, asymmetrically arginine dimethylated at one site by host PRMT6. Methylation impairs the RNA-binding activity and export of viral RNA from the nucleus to the cytoplasm. Phosphorylated by protein kinase CK2. Presence of, and maybe binding to the N-terminus of the regulatory beta subunit of CK2 is necessary for CK2-mediated Rev's phosphorylation.

It is found in the host nucleus. The protein resides in the host nucleolus. It localises to the host cytoplasm. In terms of biological role, escorts unspliced or incompletely spliced viral pre-mRNAs (late transcripts) out of the nucleus of infected cells. These pre-mRNAs carry a recognition sequence called Rev responsive element (RRE) located in the env gene, that is not present in fully spliced viral mRNAs (early transcripts). This function is essential since most viral proteins are translated from unspliced or partially spliced pre-mRNAs which cannot exit the nucleus by the pathway used by fully processed cellular mRNAs. Rev itself is translated from a fully spliced mRNA that readily exits the nucleus. Rev's nuclear localization signal (NLS) binds directly to KPNB1/Importin beta-1 without previous binding to KPNA1/Importin alpha-1. KPNB1 binds to the GDP bound form of RAN (Ran-GDP) and targets Rev to the nucleus. In the nucleus, the conversion from Ran-GDP to Ran-GTP dissociates Rev from KPNB1 and allows Rev's binding to the RRE in viral pre-mRNAs. Rev multimerization on the RRE via cooperative assembly exposes its nuclear export signal (NES) to the surface. Rev can then form a complex with XPO1/CRM1 and Ran-GTP, leading to nuclear export of the complex. Conversion from Ran-GTP to Ran-GDP mediates dissociation of the Rev/RRE/XPO1/RAN complex, so that Rev can return to the nucleus for a subsequent round of export. Beside KPNB1, also seems to interact with TNPO1/Transportin-1, RANBP5/IPO5 and IPO7/RANBP7 for nuclear import. The nucleoporin-like HRB/RIP is an essential cofactor that probably indirectly interacts with Rev to release HIV RNAs from the perinuclear region to the cytoplasm. In Human immunodeficiency virus type 1 group M subtype B (isolate PCV12) (HIV-1), this protein is Protein Rev.